Here is a 270-residue protein sequence, read N- to C-terminus: MLSASTVNPSAPWQANLWLRYDRPGHRTRMVECLVQAPLKVQRSFYPDDTGQCQTMLLHTGGGMVGGDRLGYDIVLEAQSDVCFTSASAGKIYRSLGPWSEQTVNLEVRVGASVLWCPQETIIFDQARYQQNFCIKLQEQARFKGWEIVRLGRTARGEKFTQGHWRSSWEIWQGDKLIWGERQQLIGSEQLYESPNALAGFTCLGTYVDLSRSFDQDLVHQAQEIIHSQGRSPQFGLTLTATQGLIARYRGNSTQEVKDIFTQLSQVISP.

Belongs to the UreD family. As to quaternary structure, ureD, UreF and UreG form a complex that acts as a GTP-hydrolysis-dependent molecular chaperone, activating the urease apoprotein by helping to assemble the nickel containing metallocenter of UreC. The UreE protein probably delivers the nickel.

The protein resides in the cytoplasm. Functionally, required for maturation of urease via the functional incorporation of the urease nickel metallocenter. This Synechocystis sp. (strain ATCC 27184 / PCC 6803 / Kazusa) protein is Urease accessory protein UreD.